The following is a 907-amino-acid chain: MTIQPAVPTSPTNAAPEAARVTPMMEQYLEIKAANPGLLLFYRMGDFYELFFEDAEIASCTLGITLTKRGKHQGADIPMCGVPVERSDDYLHRLIAAGHRVAVCEQMEDPAAARRRGNKSVVRRDVVRLITPGTLTEDTLLDARANNYLLALARARASSGGNRIALAWIDISTAEFIVTECSTGELAATLARINPNEVIVSDALYGDPDMAALLRELPSVTPLTRDVFDGATAERRLCDYFAVATMDGLSAMSWLEATAAAAAVTYVDRTQIGKRPPLSPPSREAAGSTMAIDPATRANLELTRTLAGERRGSLLDAIDRTMTAAGSRLLAQRLAAPLTDIAAIARRLDAVAAFTSDSAARDDIRTILRTAPDMSRALARLSVGRGGPRDLAGLRDGIMAADRTLARLSALPDPPQDIVAAMQALRRPSRELARELGEALAENLPLMKRDGGFAREGYEPTLDEARKLRDDSRLVVAAMQARYTEETGVKTLKIRHNNVLGYFVEVTAQHGDKLTSAPLNATFIHRQTLAGQVRFTTSELGEIEARIANAGDRALGLELEIFDRLAAVVVEAGDDLRAAAHAFAQLDVAASLAKLATDENFTRPEVDASLGFAIEGGRHPVVEQALKRAGQPFIANACDLSPGPGQTSGQIWLLTGPNMAGKSTFLRQNALIALMAQIGSFVPATRARIGMIDRLFSRVGAADDLARGRSTFMVEMVETAVILNQASERALVILDEIGRGTATFDGLSIAWAAIEHLHEANKCRALFATHYHELTALSAKLPRLFNATVRVKEWHGEVVFLHEVLPGAADRSYGIQVAKLAGLPPSVVARAKSVLAKLEAQDRGSTVRALVDDLPLFAVPSRAADESAPPGEAAPLIEALKALHPDEMSPREALEALYALKAKLPKP.

Position 656 to 663 (Gly656 to Ser663) interacts with ATP.

This sequence belongs to the DNA mismatch repair MutS family.

In terms of biological role, this protein is involved in the repair of mismatches in DNA. It is possible that it carries out the mismatch recognition step. This protein has a weak ATPase activity. The protein is DNA mismatch repair protein MutS of Nitrobacter hamburgensis (strain DSM 10229 / NCIMB 13809 / X14).